An 813-amino-acid polypeptide reads, in one-letter code: Leucine--tRNA ligase (813 aa).

Positions 42-52 (PYTSGNLHIGH) match the 'HIGH' region motif. The short motif at 580-584 (KMSKS) is the 'KMSKS' region element. Lys583 contacts ATP.

It belongs to the class-I aminoacyl-tRNA synthetase family.

It is found in the cytoplasm. The catalysed reaction is tRNA(Leu) + L-leucine + ATP = L-leucyl-tRNA(Leu) + AMP + diphosphate. The polypeptide is Leucine--tRNA ligase (Dehalococcoides mccartyi (strain ATCC BAA-2266 / KCTC 15142 / 195) (Dehalococcoides ethenogenes (strain 195))).